Reading from the N-terminus, the 283-residue chain is Polyamine aminopropyltransferase (283 aa).

The PABS domain occupies 5–238; sequence TTWIDEYHKG…GIWSWTFASS (234 aa). Q32 provides a ligand contact to S-methyl-5'-thioadenosine. H63 and D87 together coordinate spermidine. Residues E107 and 139–140 each bind S-methyl-5'-thioadenosine; that span reads DG. Catalysis depends on D158, which acts as the Proton acceptor. 158 to 161 lines the spermidine pocket; the sequence is DCSD.

The protein belongs to the spermidine/spermine synthase family. In terms of assembly, homodimer or homotetramer.

The protein resides in the cytoplasm. The catalysed reaction is S-adenosyl 3-(methylsulfanyl)propylamine + putrescine = S-methyl-5'-thioadenosine + spermidine + H(+). It functions in the pathway amine and polyamine biosynthesis; spermidine biosynthesis; spermidine from putrescine: step 1/1. In terms of biological role, catalyzes the irreversible transfer of a propylamine group from the amino donor S-adenosylmethioninamine (decarboxy-AdoMet) to putrescine (1,4-diaminobutane) to yield spermidine. In Prochlorococcus marinus (strain AS9601), this protein is Polyamine aminopropyltransferase.